A 483-amino-acid chain; its full sequence is Glycogen synthase kinase-3 alpha (483 aa).

Over residues 1–15 (MSGGGPSGGGPGGSG) the composition is skewed to gly residues. The segment at 1 to 96 (MSGGGPSGGG…PPPGVKLGRD (96 aa)) is disordered. Ser-2 carries the post-translational modification N-acetylserine. Ser-2 carries the phosphoserine modification. A Phosphoserine; by PKB/AKT1 modification is found at Ser-21. A compositionally biased stretch (gly residues) spans 25–82 (PGGGGGGGGGGPGGSASGPGGTGGGKASVGAMGGGVGASSSGGGPGGSGGGGSGGPGA). Phosphoserine occurs at positions 72, 77, and 97. The Protein kinase domain maps to 119 to 403 (YTDIKVIGNG…PLEACAHSFF (285 aa)). Residues 125–133 (IGNGSFGVV) and Lys-148 contribute to the ATP site. Catalysis depends on Asp-244, which acts as the Proton acceptor. Tyr-279 is subject to Phosphotyrosine. The tract at residues 449-483 (AGTTTLTPSSQALTETPTSSDWQSTDATPTLTNSS) is disordered.

It belongs to the protein kinase superfamily. CMGC Ser/Thr protein kinase family. GSK-3 subfamily. In terms of assembly, monomer. Interacts with ARRB2. Interacts with AXIN1 and CTNNB1/beta-catenin. Interacts with CTNND2. Interacts with LMBR1L. Interacts with DDX3X. Interacts with TNFRSF10B. Interacts with RICTOR; the interaction results in phosphorylation of RICTOR at 'Thr-1695' by GSK3A which facilitates FBXW7-mediated ubiquitination and subsequent degradation of RICTOR. (Microbial infection) Interacts with M.tuberculosis PtpA. Phosphorylated by AKT1 at Ser-21: upon insulin-mediated signaling, the activated PKB/AKT1 protein kinase phosphorylates and deactivates GSK3A, resulting in the dephosphorylation and activation of GYS1. Activated by phosphorylation at Tyr-279. Post-translationally, (Microbial infection) Dephosphorylated at Tyr-279 by M.tuberculosis PtpA, which leads to prevention of apoptosis during early stages of microbial infection.

The enzyme catalyses L-seryl-[tau protein] + ATP = O-phospho-L-seryl-[tau protein] + ADP + H(+). It carries out the reaction L-threonyl-[tau protein] + ATP = O-phospho-L-threonyl-[tau protein] + ADP + H(+). It catalyses the reaction L-seryl-[protein] + ATP = O-phospho-L-seryl-[protein] + ADP + H(+). The catalysed reaction is L-threonyl-[protein] + ATP = O-phospho-L-threonyl-[protein] + ADP + H(+). Its activity is regulated as follows. Activated by phosphorylation at Tyr-279. In response to insulin, inhibited by phosphorylation at Ser-21 by PKB/AKT1; phosphorylation at this site causes a conformational change, preventing access of substrates to the active site. Inhibited by lithium. Constitutively active protein kinase that acts as a negative regulator in the hormonal control of glucose homeostasis, Wnt signaling and regulation of transcription factors and microtubules, by phosphorylating and inactivating glycogen synthase (GYS1 or GYS2), CTNNB1/beta-catenin, APC and AXIN1. Requires primed phosphorylation of the majority of its substrates. Contributes to insulin regulation of glycogen synthesis by phosphorylating and inhibiting GYS1 activity and hence glycogen synthesis. Regulates glycogen metabolism in liver, but not in muscle. May also mediate the development of insulin resistance by regulating activation of transcription factors. In Wnt signaling, regulates the level and transcriptional activity of nuclear CTNNB1/beta-catenin. Facilitates amyloid precursor protein (APP) processing and the generation of APP-derived amyloid plaques found in Alzheimer disease. May be involved in the regulation of replication in pancreatic beta-cells. Is necessary for the establishment of neuronal polarity and axon outgrowth. Through phosphorylation of the anti-apoptotic protein MCL1, may control cell apoptosis in response to growth factors deprivation. Acts as a regulator of autophagy by mediating phosphorylation of KAT5/TIP60 under starvation conditions which activates KAT5/TIP60 acetyltransferase activity and promotes acetylation of key autophagy regulators, such as ULK1 and RUBCNL/Pacer. Negatively regulates extrinsic apoptotic signaling pathway via death domain receptors. Promotes the formation of an anti-apoptotic complex, made of DDX3X, BRIC2 and GSK3B, at death receptors, including TNFRSF10B. The anti-apoptotic function is most effective with weak apoptotic signals and can be overcome by stronger stimulation. Phosphorylates mTORC2 complex component RICTOR at 'Thr-1695' which facilitates FBXW7-mediated ubiquitination and subsequent degradation of RICTOR. This chain is Glycogen synthase kinase-3 alpha (GSK3A), found in Homo sapiens (Human).